Here is a 440-residue protein sequence, read N- to C-terminus: MEGESKGLIVGISLGLVIGVVLAISALFCFRYHRKKSQIVNSGSRRSATIPIRENGADSCNIMSDSTIGPDSPVKSSKNGRSVWLEGFSKRSNVISASGILEYSYRDLQKATCNFTTLIGQGAFGPVYKAQMSTGEIVAVKVLATDSKQGEKEFQTEVMLLGRLHHRNLVNLIGYCAEKGQHMLIYVYMSKGSLASHLYSEKHEPLSWDLRVYIALDVARGLEYLHDGAVPPVIHRDIKSSNILLDQSMRARVADFGLSREEMVDKHAANIRGTFGYLDPEYISTRTFTKKSDVYGFGVLLFELIAGRNPQQGLMELVELAAMNAEEKVGWEEIVDSRLDGRYDLQEVNEVAAFAYKCISRAPRKRPNMRDIVQVLTRVIKVRHCRKRQKNSPSPSPRLPPPPPIVEESEGELTANGSLRSEIHRRDNSLDSSIAEDVIL.

The chain crosses the membrane as a helical span at residues 8-28; it reads LIVGISLGLVIGVVLAISALF. The calmodulin binding stretch occupies residues 28-228; that stretch reads FCFRYHRKKS…ARGLEYLHDG (201 aa). The Protein kinase domain maps to 113-380; that stretch reads CNFTTLIGQG…DIVQVLTRVI (268 aa). ATP is bound by residues 119–127 and Lys-141; that span reads IGQGAFGPV. Tyr-186 carries the post-translational modification Phosphotyrosine. The active-site Proton acceptor is Asp-237. Ser-241 is modified (phosphoserine). Thr-274 is subject to Phosphothreonine. Tyr-282 carries the phosphotyrosine modification. The calmodulin binding stretch occupies residues 369 to 440; the sequence is MRDIVQVLTR…DSSIAEDVIL (72 aa). Residues 386 to 427 form a disordered region; sequence RKRQKNSPSPSPRLPPPPPIVEESEGELTANGSLRSEIHRRD. Over residues 394-405 the composition is skewed to pro residues; the sequence is SPSPRLPPPPPI.

This sequence belongs to the protein kinase superfamily. Ser/Thr protein kinase family. Interacts with calmodulin (CaM) in a calcium- (Ca(2+)-) dependent manner. Binds to MEKK1. Similar transcript expression levels in seedlings, roots, leaves, stems and flowers, and lower levels in siliques, but protein accumulates mostly in 7-day-old seedlings, old roots and young leaves and, to a lower extent, in young roots, old leaves, flowers and siliques (at protein level).

The protein localises to the cell membrane. The protein resides in the endosome membrane. It catalyses the reaction L-seryl-[protein] + ATP = O-phospho-L-seryl-[protein] + ADP + H(+). The catalysed reaction is L-threonyl-[protein] + ATP = O-phospho-L-threonyl-[protein] + ADP + H(+). Kinase activity is stimulated by calcium/calmodulin, but blocked by chlorpromazine. Required for cold tolerance, via the activation of MAP kinases activity. Phosphorylates and activates MEKK1 in response to cold in a calcium-dependent manner. This chain is Calcium/calmodulin-regulated receptor-like kinase 1, found in Arabidopsis thaliana (Mouse-ear cress).